The chain runs to 445 residues: Oxysterols receptor LXR-alpha (445 aa).

2 disordered regions span residues 1 to 34 and 63 to 86; these read MSLW…QGGN and ALLP…KKGP. The segment at 1 to 94 is transactivation AF-1; required for ligand-independent transactivation function; the sequence is MSLWLEASMP…GPAPKMLGNE (94 aa). Positions 93–168 form a DNA-binding region, nuclear receptor; the sequence is NELCSVCGDK…AGMREECVLS (76 aa). 2 NR C4-type zinc fingers span residues 96 to 116 and 132 to 156; these read CSVC…CEGC and CHSG…LRKC. Ser191 is modified (phosphoserine). The interval 203 to 445 is transactivation AF-2; required for ligand-dependent transactivation function; mediates interaction with CCAR2; that stretch reads QLSPEQLGMI…LLSEIWDVHE (243 aa). One can recognise an NR LBD domain in the interval 207–445; that stretch reads EQLGMIEKLV…LLSEIWDVHE (239 aa).

The protein belongs to the nuclear hormone receptor family. NR1 subfamily. Heterodimer of NR1H3 and RXR (retinoic acid receptor). Interacts with CCAR2 (via N-terminus) in a ligand-independent manner. Interacts with SIRT1 and this interaction is inhibited by CCAR2. Ubiquitinated. Ubiquitination by UBR5 leads to its degradation: UBR5 specifically recognizes and binds ligand-bound NR1H3 when it is not associated with coactivators (NCOAs). In presence of NCOAs, the UBR5-degron is not accessible, preventing its ubiquitination and degradation.

The protein localises to the nucleus. Its subcellular location is the cytoplasm. Functionally, nuclear receptor that exhibits a ligand-dependent transcriptional activation activity. Interaction with retinoic acid receptor (RXR) shifts RXR from its role as a silent DNA-binding partner to an active ligand-binding subunit in mediating retinoid responses through target genes defined by LXRES. LXRES are DR4-type response elements characterized by direct repeats of two similar hexanuclotide half-sites spaced by four nucleotides. Plays an important role in the regulation of cholesterol homeostasis, regulating cholesterol uptake through MYLIP-dependent ubiquitination of LDLR, VLDLR and LRP8. Interplays functionally with RORA for the regulation of genes involved in liver metabolism. Induces LPCAT3-dependent phospholipid remodeling in endoplasmic reticulum (ER) membranes of hepatocytes, driving SREBF1 processing and lipogenesis. Via LPCAT3, triggers the incorporation of arachidonate into phosphatidylcholines of ER membranes, increasing membrane dynamics and enabling triacylglycerols transfer to nascent very low-density lipoprotein (VLDL) particles. Via LPCAT3 also counteracts lipid-induced ER stress response and inflammation, likely by modulating SRC kinase membrane compartmentalization and limiting the synthesis of lipid inflammatory mediators. The sequence is that of Oxysterols receptor LXR-alpha (Nr1h3) from Mus musculus (Mouse).